A 51-amino-acid chain; its full sequence is Cyclic phosphodiesterase (51 aa).

The active-site Proton donor/acceptor is His-11. Thr-13 is a substrate binding site. His-38 functions as the Proton donor/acceptor in the catalytic mechanism. Positions 40 and 43 each coordinate substrate.

This sequence belongs to the 2H phosphoesterase superfamily. CPD1 family.

Functionally, hydrolyzes ADP-ribose 1'',2''-cyclic phosphate (Appr&gt;1) that is produced during tRNA splicing into ADP-ribose 1''-phosphate (Appr-1''p). This Triticum aestivum (Wheat) protein is Cyclic phosphodiesterase.